A 347-amino-acid chain; its full sequence is Gentisate 1,2 dioxygenase 1 (347 aa).

The 68-residue stretch at 96–163 (LQLILPGEVA…DSDKPMIWMD (68 aa)) folds into the Cupin type-2 domain.

The protein belongs to the gentisate 1,2-dioxygenase family. As to quaternary structure, homotetramer. The cofactor is Fe(2+).

The enzyme catalyses 2,5-dihydroxybenzoate + O2 = 3-maleylpyruvate + H(+). Its activity is regulated as follows. Completely inhibited by the presence of 5 mM Cu(2+). Partially inhibited with 5 mM Mn(2+), Zn(2+) or EDTA. In terms of biological role, involved in the degradation of gentisate. Catalyzes the conversion of gentisate (2,5-dihydroxybenzoate) to maleylpyruvate. Exhibits broad substrate specificities towards alkyl and halogenated gentisates. The sequence is that of Gentisate 1,2 dioxygenase 1 from Aquipseudomonas alcaligenes (Pseudomonas alcaligenes).